The following is a 329-amino-acid chain: Holliday junction branch migration complex subunit RuvB (329 aa).

Residues 1–180 form a large ATPase domain (RuvB-L) region; the sequence is MKNILQSTEC…FGIPIHLEFY (180 aa). ATP contacts are provided by residues Ile19, Arg20, Gly61, Lys64, Thr65, Thr66, 127–129, Arg170, Tyr180, and Arg217; that span reads EDF. Thr65 is a Mg(2+) binding site. Residues 181 to 252 form a small ATPAse domain (RuvB-S) region; it reads STEELIKVIQ…FADKALLRLG (72 aa). A head domain (RuvB-H) region spans residues 255–329; sequence KLGLDRQDIQ…ISYLKEQSYI (75 aa). Residues Arg308 and Arg313 each coordinate DNA.

It belongs to the RuvB family. In terms of assembly, homohexamer. Forms an RuvA(8)-RuvB(12)-Holliday junction (HJ) complex. HJ DNA is sandwiched between 2 RuvA tetramers; dsDNA enters through RuvA and exits via RuvB. An RuvB hexamer assembles on each DNA strand where it exits the tetramer. Each RuvB hexamer is contacted by two RuvA subunits (via domain III) on 2 adjacent RuvB subunits; this complex drives branch migration. In the full resolvosome a probable DNA-RuvA(4)-RuvB(12)-RuvC(2) complex forms which resolves the HJ.

It localises to the cytoplasm. The enzyme catalyses ATP + H2O = ADP + phosphate + H(+). The RuvA-RuvB-RuvC complex processes Holliday junction (HJ) DNA during genetic recombination and DNA repair, while the RuvA-RuvB complex plays an important role in the rescue of blocked DNA replication forks via replication fork reversal (RFR). RuvA specifically binds to HJ cruciform DNA, conferring on it an open structure. The RuvB hexamer acts as an ATP-dependent pump, pulling dsDNA into and through the RuvAB complex. RuvB forms 2 homohexamers on either side of HJ DNA bound by 1 or 2 RuvA tetramers; 4 subunits per hexamer contact DNA at a time. Coordinated motions by a converter formed by DNA-disengaged RuvB subunits stimulates ATP hydrolysis and nucleotide exchange. Immobilization of the converter enables RuvB to convert the ATP-contained energy into a lever motion, pulling 2 nucleotides of DNA out of the RuvA tetramer per ATP hydrolyzed, thus driving DNA branch migration. The RuvB motors rotate together with the DNA substrate, which together with the progressing nucleotide cycle form the mechanistic basis for DNA recombination by continuous HJ branch migration. Branch migration allows RuvC to scan DNA until it finds its consensus sequence, where it cleaves and resolves cruciform DNA. The polypeptide is Holliday junction branch migration complex subunit RuvB (Ehrlichia canis (strain Jake)).